Reading from the N-terminus, the 101-residue chain is Gibberellin-regulated protein 6 (101 aa).

An N-terminal signal peptide occupies residues 1–23; it reads MAKLITSFLLLTILFTFVCLTMS.

The protein belongs to the GASA family. In terms of processing, six disulfide bonds may be present.

The protein localises to the secreted. Gibberellin-regulated protein that may function in hormonal controlled steps of development such as seed germination, flowering and seed maturation. The chain is Gibberellin-regulated protein 6 (GASA6) from Arabidopsis thaliana (Mouse-ear cress).